The following is a 326-amino-acid chain: DNA-directed RNA polymerase subunit alpha (326 aa).

The segment at 1 to 231 (MQSNSLLKPR…DQLSVFADLE (231 aa)) is alpha N-terminal domain (alpha-NTD). The segment at 245 to 326 (IDPVLLRPVD…WPPAGLEKLG (82 aa)) is alpha C-terminal domain (alpha-CTD).

The protein belongs to the RNA polymerase alpha chain family. Homodimer. The RNAP catalytic core consists of 2 alpha, 1 beta, 1 beta' and 1 omega subunit. When a sigma factor is associated with the core the holoenzyme is formed, which can initiate transcription.

The enzyme catalyses RNA(n) + a ribonucleoside 5'-triphosphate = RNA(n+1) + diphosphate. In terms of biological role, DNA-dependent RNA polymerase catalyzes the transcription of DNA into RNA using the four ribonucleoside triphosphates as substrates. The sequence is that of DNA-directed RNA polymerase subunit alpha from Aromatoleum aromaticum (strain DSM 19018 / LMG 30748 / EbN1) (Azoarcus sp. (strain EbN1)).